We begin with the raw amino-acid sequence, 317 residues long: Probable arabinan endo-1,5-alpha-L-arabinosidase C (317 aa).

The N-terminal stretch at 1 to 17 (MLSFLAALSLPLALVNA) is a signal peptide. The active-site Proton acceptor is D32. N190 is a glycosylation site (N-linked (GlcNAc...) asparagine). E198 (proton donor) is an active-site residue.

This sequence belongs to the glycosyl hydrolase 43 family.

It is found in the secreted. The catalysed reaction is Endohydrolysis of (1-&gt;5)-alpha-arabinofuranosidic linkages in (1-&gt;5)-arabinans.. The protein operates within glycan metabolism; L-arabinan degradation. Endo-1,5-alpha-L-arabinanase involved in degradation of pectin. Its preferred substrate is linear 1,5-alpha-L-arabinan. The polypeptide is Probable arabinan endo-1,5-alpha-L-arabinosidase C (abnC) (Aspergillus flavus (strain ATCC 200026 / FGSC A1120 / IAM 13836 / NRRL 3357 / JCM 12722 / SRRC 167)).